A 484-amino-acid polypeptide reads, in one-letter code: Adenylyltransferase and sulfurtransferase uba4 (484 aa).

Residues Ala-39–Ala-49 show a composition bias toward low complexity. A disordered region spans residues Ala-39 to Arg-58. Residues Gly-98, Asp-119, Ser-126–Arg-130, Lys-143, and Asp-187–Asn-188 contribute to the ATP site. Residues Cys-236 and Cys-239 each coordinate Zn(2+). Cys-253 serves as the catalytic Glycyl thioester intermediate; for adenylyltransferase activity. 2 residues coordinate Zn(2+): Cys-313 and Cys-316. In terms of domain architecture, Rhodanese spans Pro-370–Pro-482. Cys-437 acts as the Cysteine persulfide intermediate; for sulfurtransferase activity in catalysis.

It in the N-terminal section; belongs to the HesA/MoeB/ThiF family. UBA4 subfamily. It depends on Zn(2+) as a cofactor.

The protein resides in the cytoplasm. Its subcellular location is the cytosol. It catalyses the reaction [molybdopterin-synthase sulfur-carrier protein]-C-terminal Gly-Gly + ATP + H(+) = [molybdopterin-synthase sulfur-carrier protein]-C-terminal Gly-Gly-AMP + diphosphate. It carries out the reaction [molybdopterin-synthase sulfur-carrier protein]-C-terminal Gly-Gly-AMP + S-sulfanyl-L-cysteinyl-[cysteine desulfurase] + AH2 = [molybdopterin-synthase sulfur-carrier protein]-C-terminal-Gly-aminoethanethioate + L-cysteinyl-[cysteine desulfurase] + A + AMP + 2 H(+). Its pathway is tRNA modification; 5-methoxycarbonylmethyl-2-thiouridine-tRNA biosynthesis. It functions in the pathway cofactor biosynthesis; molybdopterin biosynthesis. In terms of biological role, plays a central role in 2-thiolation of mcm(5)S(2)U at tRNA wobble positions of cytosolic tRNA(Lys), tRNA(Glu) and tRNA(Gln). Also essential during biosynthesis of the molybdenum cofactor. Acts by mediating the C-terminal thiocarboxylation of sulfur carriers urm1 and mocs2a. Its N-terminus first activates urm1 and mocs2a as acyl-adenylates (-COAMP), then the persulfide sulfur on the catalytic cysteine is transferred to urm1 and mocs2a to form thiocarboxylation (-COSH) of their C-terminus. The reaction probably involves hydrogen sulfide that is generated from the persulfide intermediate and that acts as a nucleophile towards urm1 and mocs2a. Subsequently, a transient disulfide bond is formed. Does not use thiosulfate as sulfur donor; nfs1 probably acting as a sulfur donor for thiocarboxylation reactions. The chain is Adenylyltransferase and sulfurtransferase uba4 from Aspergillus terreus (strain NIH 2624 / FGSC A1156).